The following is a 154-amino-acid chain: Ribonuclease H (154 aa).

The 143-residue stretch at 5–147 (GKSRVAIYTD…ADMLARGEVE (143 aa)) folds into the RNase H type-1 domain. Mg(2+) is bound by residues Asp14, Glu53, Asp75, and Asp139.

It belongs to the RNase H family. In terms of assembly, monomer. Mg(2+) serves as cofactor.

It is found in the cytoplasm. It carries out the reaction Endonucleolytic cleavage to 5'-phosphomonoester.. Endonuclease that specifically degrades the RNA of RNA-DNA hybrids. This chain is Ribonuclease H, found in Anaplasma marginale (strain St. Maries).